The primary structure comprises 445 residues: Phosphoglucosamine mutase (445 aa).

The active-site Phosphoserine intermediate is serine 102. Mg(2+) contacts are provided by serine 102, aspartate 241, aspartate 243, and aspartate 245. At serine 102 the chain carries Phosphoserine.

Belongs to the phosphohexose mutase family. The cofactor is Mg(2+). Activated by phosphorylation.

The catalysed reaction is alpha-D-glucosamine 1-phosphate = D-glucosamine 6-phosphate. Catalyzes the conversion of glucosamine-6-phosphate to glucosamine-1-phosphate. This is Phosphoglucosamine mutase from Citrobacter koseri (strain ATCC BAA-895 / CDC 4225-83 / SGSC4696).